A 392-amino-acid chain; its full sequence is Formate-dependent phosphoribosylglycinamide formyltransferase (392 aa).

Residues Glu-15–Leu-16 and Glu-75 each bind N(1)-(5-phospho-beta-D-ribosyl)glycinamide. ATP is bound by residues Arg-107, Lys-148, Ser-153–Gln-158, Glu-188–Leu-191, and Glu-196. An ATP-grasp domain is found at Asp-112–Leu-302. Mg(2+)-binding residues include Glu-261 and Glu-273. N(1)-(5-phospho-beta-D-ribosyl)glycinamide contacts are provided by residues Asp-280, Lys-350, and Arg-357 to Arg-358.

It belongs to the PurK/PurT family. In terms of assembly, homodimer.

It catalyses the reaction N(1)-(5-phospho-beta-D-ribosyl)glycinamide + formate + ATP = N(2)-formyl-N(1)-(5-phospho-beta-D-ribosyl)glycinamide + ADP + phosphate + H(+). The protein operates within purine metabolism; IMP biosynthesis via de novo pathway; N(2)-formyl-N(1)-(5-phospho-D-ribosyl)glycinamide from N(1)-(5-phospho-D-ribosyl)glycinamide (formate route): step 1/1. In terms of biological role, involved in the de novo purine biosynthesis. Catalyzes the transfer of formate to 5-phospho-ribosyl-glycinamide (GAR), producing 5-phospho-ribosyl-N-formylglycinamide (FGAR). Formate is provided by PurU via hydrolysis of 10-formyl-tetrahydrofolate. The chain is Formate-dependent phosphoribosylglycinamide formyltransferase from Synechococcus sp. (strain CC9902).